The chain runs to 812 residues: Xaa-Pro dipeptidyl-peptidase (812 aa).

Active-site charge relay system residues include Ser-372, Asp-492, and His-523.

Belongs to the peptidase S15 family. Homodimer.

The protein localises to the cytoplasm. The enzyme catalyses Hydrolyzes Xaa-Pro-|- bonds to release unblocked, N-terminal dipeptides from substrates including Ala-Pro-|-p-nitroanilide and (sequentially) Tyr-Pro-|-Phe-Pro-|-Gly-Pro-|-Ile.. Its function is as follows. Removes N-terminal dipeptides sequentially from polypeptides having unsubstituted N-termini provided that the penultimate residue is proline. The chain is Xaa-Pro dipeptidyl-peptidase from Pediococcus pentosaceus (strain ATCC 25745 / CCUG 21536 / LMG 10740 / 183-1w).